The sequence spans 142 residues: Nucleoside diphosphate kinase (142 aa).

6 residues coordinate ATP: Lys9, Phe57, Arg85, Thr91, Arg102, and Asn112. Residues 87–106 are disordered; the sequence is AMGATDPAKSEKGTVRGDLG. His115 serves as the catalytic Pros-phosphohistidine intermediate.

This sequence belongs to the NDK family. In terms of assembly, homotetramer. Mg(2+) serves as cofactor.

The protein resides in the cytoplasm. It catalyses the reaction a 2'-deoxyribonucleoside 5'-diphosphate + ATP = a 2'-deoxyribonucleoside 5'-triphosphate + ADP. The catalysed reaction is a ribonucleoside 5'-diphosphate + ATP = a ribonucleoside 5'-triphosphate + ADP. Major role in the synthesis of nucleoside triphosphates other than ATP. The ATP gamma phosphate is transferred to the NDP beta phosphate via a ping-pong mechanism, using a phosphorylated active-site intermediate. The sequence is that of Nucleoside diphosphate kinase from Dehalococcoides mccartyi (strain ATCC BAA-2266 / KCTC 15142 / 195) (Dehalococcoides ethenogenes (strain 195)).